The following is a 230-amino-acid chain: 5'-methylthioadenosine/S-adenosylhomocysteine nucleosidase (230 aa).

The Proton acceptor role is filled by E12. Residues G78, I153, and 174-175 (ME) each bind substrate. The active-site Proton donor is D198.

The protein belongs to the PNP/UDP phosphorylase family. MtnN subfamily.

It catalyses the reaction S-adenosyl-L-homocysteine + H2O = S-(5-deoxy-D-ribos-5-yl)-L-homocysteine + adenine. The enzyme catalyses S-methyl-5'-thioadenosine + H2O = 5-(methylsulfanyl)-D-ribose + adenine. It carries out the reaction 5'-deoxyadenosine + H2O = 5-deoxy-D-ribose + adenine. Its pathway is amino-acid biosynthesis; L-methionine biosynthesis via salvage pathway; S-methyl-5-thio-alpha-D-ribose 1-phosphate from S-methyl-5'-thioadenosine (hydrolase route): step 1/2. Catalyzes the irreversible cleavage of the glycosidic bond in both 5'-methylthioadenosine (MTA) and S-adenosylhomocysteine (SAH/AdoHcy) to adenine and the corresponding thioribose, 5'-methylthioribose and S-ribosylhomocysteine, respectively. Also cleaves 5'-deoxyadenosine, a toxic by-product of radical S-adenosylmethionine (SAM) enzymes, into 5-deoxyribose and adenine. This Shewanella piezotolerans (strain WP3 / JCM 13877) protein is 5'-methylthioadenosine/S-adenosylhomocysteine nucleosidase.